The chain runs to 119 residues: Large ribosomal subunit protein uL18 (119 aa).

The protein belongs to the universal ribosomal protein uL18 family. As to quaternary structure, part of the 50S ribosomal subunit; part of the 5S rRNA/L5/L18/L25 subcomplex. Contacts the 5S and 23S rRNAs.

This is one of the proteins that bind and probably mediate the attachment of the 5S RNA into the large ribosomal subunit, where it forms part of the central protuberance. This Clostridium botulinum (strain Loch Maree / Type A3) protein is Large ribosomal subunit protein uL18.